A 137-amino-acid polypeptide reads, in one-letter code: Small ribosomal subunit protein uS12 (137 aa).

Positions 1–25 (MPTINQLVRQGRKSKTYKSDSPALS) are disordered. 3-methylthioaspartic acid is present on aspartate 102.

Belongs to the universal ribosomal protein uS12 family. In terms of assembly, part of the 30S ribosomal subunit. Contacts proteins S8 and S17. May interact with IF1 in the 30S initiation complex.

In terms of biological role, with S4 and S5 plays an important role in translational accuracy. Its function is as follows. Interacts with and stabilizes bases of the 16S rRNA that are involved in tRNA selection in the A site and with the mRNA backbone. Located at the interface of the 30S and 50S subunits, it traverses the body of the 30S subunit contacting proteins on the other side and probably holding the rRNA structure together. The combined cluster of proteins S8, S12 and S17 appears to hold together the shoulder and platform of the 30S subunit. This is Small ribosomal subunit protein uS12 from Finegoldia magna (strain ATCC 29328 / DSM 20472 / WAL 2508) (Peptostreptococcus magnus).